A 431-amino-acid polypeptide reads, in one-letter code: Glycerol-3-phosphate dehydrogenase [NAD(P)+] (431 aa).

Polar residues predominate over residues 1–19 (MTSANDKSTDTNVDSTQAE). Residues 1 to 25 (MTSANDKSTDTNVDSTQAEQKMAEK) are disordered. NADPH is bound by residues serine 79, phenylalanine 80, arginine 100, and lysine 173. Residues lysine 173 and glycine 201 each contribute to the sn-glycerol 3-phosphate site. Alanine 205 contributes to the NADPH binding site. Residues lysine 256, aspartate 309, serine 319, arginine 320, and asparagine 321 each coordinate sn-glycerol 3-phosphate. Lysine 256 serves as the catalytic Proton acceptor. Arginine 320 is a binding site for NADPH. NADPH is bound at residue glutamate 346.

It belongs to the NAD-dependent glycerol-3-phosphate dehydrogenase family.

The protein localises to the cytoplasm. It carries out the reaction sn-glycerol 3-phosphate + NAD(+) = dihydroxyacetone phosphate + NADH + H(+). The catalysed reaction is sn-glycerol 3-phosphate + NADP(+) = dihydroxyacetone phosphate + NADPH + H(+). It participates in membrane lipid metabolism; glycerophospholipid metabolism. In terms of biological role, catalyzes the reduction of the glycolytic intermediate dihydroxyacetone phosphate (DHAP) to sn-glycerol 3-phosphate (G3P), the key precursor for phospholipid synthesis. The protein is Glycerol-3-phosphate dehydrogenase [NAD(P)+] of Psychrobacter arcticus (strain DSM 17307 / VKM B-2377 / 273-4).